We begin with the raw amino-acid sequence, 197 residues long: Peptide deformylase (197 aa).

Cysteine 106 and histidine 148 together coordinate Fe cation. Glutamate 149 is a catalytic residue. Histidine 152 contributes to the Fe cation binding site.

The protein belongs to the polypeptide deformylase family. It depends on Fe(2+) as a cofactor.

The catalysed reaction is N-terminal N-formyl-L-methionyl-[peptide] + H2O = N-terminal L-methionyl-[peptide] + formate. Removes the formyl group from the N-terminal Met of newly synthesized proteins. Requires at least a dipeptide for an efficient rate of reaction. N-terminal L-methionine is a prerequisite for activity but the enzyme has broad specificity at other positions. The polypeptide is Peptide deformylase (Mycolicibacterium smegmatis (strain ATCC 700084 / mc(2)155) (Mycobacterium smegmatis)).